Reading from the N-terminus, the 501-residue chain is Aromatase 3 (501 aa).

Cysteine 435 is a heme binding site.

This sequence belongs to the cytochrome P450 family. It depends on heme as a cofactor. In terms of tissue distribution, ovary.

It localises to the membrane. The catalysed reaction is testosterone + 3 reduced [NADPH--hemoprotein reductase] + 3 O2 = 17beta-estradiol + formate + 3 oxidized [NADPH--hemoprotein reductase] + 4 H2O + 4 H(+). The enzyme catalyses androst-4-ene-3,17-dione + 3 reduced [NADPH--hemoprotein reductase] + 3 O2 = estrone + formate + 3 oxidized [NADPH--hemoprotein reductase] + 4 H2O + 4 H(+). Functionally, catalyzes the formation of aromatic C18 estrogens from C19 androgens. This is Aromatase 3 (CYP19A3) from Sus scrofa (Pig).